An 824-amino-acid chain; its full sequence is Fibroblast growth factor receptor 2 (824 aa).

A signal peptide spans 1 to 21 (MFSWSYLMGLVMVATATLSLA). At 22–374 (RPSYNIAEDT…LDSSSSEYTE (353 aa)) the chain is on the extracellular side. The 101-residue stretch at 25 to 125 (YNIAEDTTLE…ETRYFIVNIT (101 aa)) folds into the Ig-like C2-type 1 domain. C62 and C107 are disulfide-bonded. N-linked (GlcNAc...) asparagine glycans are attached at residues N83, N123, and N128. A disordered region spans residues 125-152 (TDGNSSGDDEDDNDGSEDFTNDNNHKRA). Residues 131–144 (GDDEDDNDGSEDFT) are compositionally biased toward acidic residues. Ig-like C2-type domains lie at 153 to 246 (PYWT…YHLD) and 254 to 356 (PPIL…AWLT). The interval 160–177 (KLEKKLHAVPAANTVKFR) is heparin-binding. An intrachain disulfide couples C178 to C230. N-linked (GlcNAc...) asparagine glycans are attached at residues N227, N240, N264, N295, N316, and N329. A disulfide bridge links C277 with C340. The helical transmembrane segment at 375–395 (IAIYCVGGFLIACMIGTIMMC) threads the bilayer. At 396-824 (HMKGRGKKSD…PLKHEATQPA (429 aa)) the chain is on the cytoplasmic side. At Y463 the chain carries Phosphotyrosine; by autocatalysis. The Protein kinase domain occupies 478-767 (LTLGKPLGEG…LTQTTNEEYL (290 aa)). Residues 484–492 (LGEGCFGQV), K514, 562–564 (EYA), and N568 each bind ATP. A Phosphotyrosine; by autocatalysis modification is found at Y583. D623 acts as the Proton acceptor in catalysis. Y653, Y654, and Y766 each carry phosphotyrosine; by autocatalysis. Residues 801-824 (SMNLAFPNPNTQMAPLKHEATQPA) are disordered.

It belongs to the protein kinase superfamily. Tyr protein kinase family. Fibroblast growth factor receptor subfamily. Monomer. Homodimer after ligand binding. Autophosphorylated. Binding of FGF family members together with heparan sulfate proteoglycan or heparin promotes receptor dimerization and autophosphorylation on tyrosine residues. Autophosphorylation occurs in trans between the two FGFR molecules present in the dimer. Post-translationally, N-glycosylated in the endoplasmic reticulum. The N-glycan chains undergo further maturation to an Endo H-resistant form in the Golgi apparatus. In terms of processing, ubiquitinated. FGFR2 is rapidly ubiquitinated after autophosphorylation, leading to internalization and degradation. Subject to degradation both in lysosomes and by the proteasome.

The protein resides in the cell membrane. It localises to the golgi apparatus. Its subcellular location is the cytoplasmic vesicle. The catalysed reaction is L-tyrosyl-[protein] + ATP = O-phospho-L-tyrosyl-[protein] + ADP + H(+). With respect to regulation, present in an inactive conformation in the absence of bound ligand. Ligand binding leads to dimerization and activation by autophosphorylation on tyrosine residues. Functionally, tyrosine-protein kinase that acts as a cell-surface receptor for fibroblast growth factors and plays an essential role in the regulation of cell proliferation, differentiation, migration and apoptosis, and in the regulation of embryonic development. Required for normal embryonic patterning, limb bud development, lung morphogenesis, osteogenesis and skin development. Plays an essential role in the regulation of osteoblast differentiation, proliferation and apoptosis, and is required for normal skeleton development. Promotes cell proliferation in keratinocytes and immature osteoblasts, but promotes apoptosis in differentiated osteoblasts. Phosphorylates PLCG1, FRS2 and PAK4. Ligand binding leads to the activation of several signaling cascades. Activation of PLCG1 leads to the production of the cellular signaling molecules diacylglycerol and inositol 1,4,5-trisphosphate. Phosphorylation of FRS2 triggers recruitment of GRB2, GAB1, PIK3R1 and SOS1, and mediates activation of RAS, MAPK1/ERK2, MAPK3/ERK1 and the MAP kinase signaling pathway, as well as of the AKT1 signaling pathway. FGFR2 signaling is down-regulated by ubiquitination, internalization and degradation. Mutations that lead to constitutive kinase activation or impair normal FGFR2 maturation, internalization and degradation lead to aberrant signaling. Over-expressed FGFR2 promotes activation of STAT1. The sequence is that of Fibroblast growth factor receptor 2 (FGFR2) from Pleurodeles waltl (Iberian ribbed newt).